Here is a 151-residue protein sequence, read N- to C-terminus: Lipoprotein signal peptidase (151 aa).

Transmembrane regions (helical) follow at residues 3-23, 59-79, and 85-107; these read LYII…GWIV, WFFY…FYTS, and LYRI…RLHL. Residues Asp112 and Asp128 contribute to the active site. A helical membrane pass occupies residues 123–143; that stretch reads IFNVADTALTCGVICVFIAIL.

It belongs to the peptidase A8 family.

The protein localises to the cell membrane. It catalyses the reaction Release of signal peptides from bacterial membrane prolipoproteins. Hydrolyzes -Xaa-Yaa-Zaa-|-(S,diacylglyceryl)Cys-, in which Xaa is hydrophobic (preferably Leu), and Yaa (Ala or Ser) and Zaa (Gly or Ala) have small, neutral side chains.. It participates in protein modification; lipoprotein biosynthesis (signal peptide cleavage). Functionally, this protein specifically catalyzes the removal of signal peptides from prolipoproteins. This Latilactobacillus sakei subsp. sakei (strain 23K) (Lactobacillus sakei subsp. sakei) protein is Lipoprotein signal peptidase.